The primary structure comprises 513 residues: Putative ATP-dependent RNA helicase QP509L (513 aa).

The Helicase ATP-binding domain maps to 110-262 (KKLLSPYGRF…KIIIHHLGQP (153 aa)). An ATP-binding site is contributed by 123–130 (LNTGLGKT). The DEAH box signature appears at 215–218 (DEAH).

Belongs to the DEAD box helicase family. DEAH subfamily.

The enzyme catalyses ATP + H2O = ADP + phosphate + H(+). The sequence is that of Putative ATP-dependent RNA helicase QP509L from Ornithodoros (relapsing fever ticks).